Consider the following 101-residue polypeptide: Urease subunit beta (101 aa).

The protein belongs to the urease beta subunit family. Heterotrimer of UreA (gamma), UreB (beta) and UreC (alpha) subunits. Three heterotrimers associate to form the active enzyme.

Its subcellular location is the cytoplasm. It catalyses the reaction urea + 2 H2O + H(+) = hydrogencarbonate + 2 NH4(+). It participates in nitrogen metabolism; urea degradation; CO(2) and NH(3) from urea (urease route): step 1/1. This is Urease subunit beta from Actinobacillus pleuropneumoniae serotype 5b (strain L20).